The sequence spans 491 residues: Glutamyl-tRNA(Gln) amidotransferase subunit A (491 aa).

Active-site charge relay system residues include lysine 78 and serine 158. Residue serine 182 is the Acyl-ester intermediate of the active site.

This sequence belongs to the amidase family. GatA subfamily. In terms of assembly, heterotrimer of A, B and C subunits.

The catalysed reaction is L-glutamyl-tRNA(Gln) + L-glutamine + ATP + H2O = L-glutaminyl-tRNA(Gln) + L-glutamate + ADP + phosphate + H(+). Functionally, allows the formation of correctly charged Gln-tRNA(Gln) through the transamidation of misacylated Glu-tRNA(Gln) in organisms which lack glutaminyl-tRNA synthetase. The reaction takes place in the presence of glutamine and ATP through an activated gamma-phospho-Glu-tRNA(Gln). This is Glutamyl-tRNA(Gln) amidotransferase subunit A from Nitrobacter winogradskyi (strain ATCC 25391 / DSM 10237 / CIP 104748 / NCIMB 11846 / Nb-255).